The chain runs to 358 residues: MEQELRSTPSWKLDKFIEVYLLPNTSFRDDVKSAINVLCDFLKERCFRDTVHPVRVSKVVKGGSSGKGTTLKGKSDADLVVFLNNFTSFEDQLNRRGEFIKEIKKQLYEVQREKHFRVKFEVQSSWWPNPRALSFKLSAPHLQQEVEFDVLPAYDVLGHVSLYSNPDPKIYTILISECISLGKDGEFSTCFTELQRNFLKQRPTKLKSLIRLVKHWYQLCKEKLGKPLPPQYALELLTVYAWERGNGITEFNTAQGFRTILELVTKYQQLRIYWTKYYDFQHPDVSKYLHRQLRKSRPVILDPADPTGNVAGGNQEGWRRLASEARLWLQYPCFMNRGGSPVSSWEVPVDEAWSCILL.

Residues 14–61 (DKFIEVYLLPNTSFRDDVKSAINVLCDFLKERCFRDTVHPVRVSKVVK) form an interaction with dsRNA region. Ser-64 contacts ATP. Mg(2+)-binding residues include Asp-76, Asp-78, and Asp-149. Positions 201–211 (QRPTKLKSLIR) are interaction with dsRNA. ATP is bound by residues Arg-211, Lys-214, and Gln-231.

This sequence belongs to the 2-5A synthase family. Monomer. Homotetramer. Interacts with OAS1D. Mg(2+) serves as cofactor.

It is found in the cytoplasm. Its subcellular location is the mitochondrion. The protein resides in the nucleus. It localises to the microsome. The protein localises to the endoplasmic reticulum. The catalysed reaction is 3 ATP = 5'-triphosphoadenylyl-(2'-&gt;5')-adenylyl-(2'-&gt;5')-adenosine + 2 diphosphate. With respect to regulation, produced as a latent enzyme which is activated by dsRNA generated during the course of viral infection. The dsRNA activator must be at least 15 nucleotides long, and no modification of the 2'-hydroxyl group is tolerated. ssRNA or dsDNA do not act as activators. Functionally, interferon-induced, dsRNA-activated antiviral enzyme which plays a critical role in cellular innate antiviral response. In addition, it may also play a role in other cellular processes such as apoptosis, cell growth, differentiation and gene regulation. Synthesizes higher oligomers of 2'-5'-oligoadenylates (2-5A) from ATP which then bind to the inactive monomeric form of ribonuclease L (RNase L) leading to its dimerization and subsequent activation. Activation of RNase L leads to degradation of cellular as well as viral RNA, resulting in the inhibition of protein synthesis, thus terminating viral replication. Can mediate the antiviral effect via the classical RNase L-dependent pathway or an alternative antiviral pathway independent of RNase L. The polypeptide is 2'-5'-oligoadenylate synthase 1A (Oas1a) (Rattus norvegicus (Rat)).